The following is a 207-amino-acid chain: Dephospho-CoA kinase (207 aa).

The region spanning 8 to 207 (AIALTGSIGS…LPCVDCVQSS (200 aa)) is the DPCK domain. Position 16–21 (16–21 (GSGKST)) interacts with ATP.

This sequence belongs to the CoaE family.

The protein resides in the cytoplasm. It carries out the reaction 3'-dephospho-CoA + ATP = ADP + CoA + H(+). Its pathway is cofactor biosynthesis; coenzyme A biosynthesis; CoA from (R)-pantothenate: step 5/5. In terms of biological role, catalyzes the phosphorylation of the 3'-hydroxyl group of dephosphocoenzyme A to form coenzyme A. In Helicobacter hepaticus (strain ATCC 51449 / 3B1), this protein is Dephospho-CoA kinase.